We begin with the raw amino-acid sequence, 219 residues long: 2-C-methyl-D-erythritol 4-phosphate cytidylyltransferase (219 aa).

It belongs to the IspD/TarI cytidylyltransferase family. IspD subfamily.

It catalyses the reaction 2-C-methyl-D-erythritol 4-phosphate + CTP + H(+) = 4-CDP-2-C-methyl-D-erythritol + diphosphate. Its pathway is isoprenoid biosynthesis; isopentenyl diphosphate biosynthesis via DXP pathway; isopentenyl diphosphate from 1-deoxy-D-xylulose 5-phosphate: step 2/6. Functionally, catalyzes the formation of 4-diphosphocytidyl-2-C-methyl-D-erythritol from CTP and 2-C-methyl-D-erythritol 4-phosphate (MEP). In Endomicrobium trichonymphae, this protein is 2-C-methyl-D-erythritol 4-phosphate cytidylyltransferase.